The primary structure comprises 236 residues: NADH-quinone oxidoreductase subunit C (236 aa).

A disordered region spans residues Met-1–Val-20.

The protein belongs to the complex I 30 kDa subunit family. In terms of assembly, NDH-1 is composed of 14 different subunits. Subunits NuoB, C, D, E, F, and G constitute the peripheral sector of the complex.

It localises to the cell membrane. It catalyses the reaction a quinone + NADH + 5 H(+)(in) = a quinol + NAD(+) + 4 H(+)(out). Its function is as follows. NDH-1 shuttles electrons from NADH, via FMN and iron-sulfur (Fe-S) centers, to quinones in the respiratory chain. The immediate electron acceptor for the enzyme in this species is believed to be a menaquinone. Couples the redox reaction to proton translocation (for every two electrons transferred, four hydrogen ions are translocated across the cytoplasmic membrane), and thus conserves the redox energy in a proton gradient. This is NADH-quinone oxidoreductase subunit C from Mycobacterium tuberculosis (strain ATCC 25177 / H37Ra).